A 213-amino-acid polypeptide reads, in one-letter code: Thiopurine S-methyltransferase (213 aa).

Residues W10, L45, E66, and R121 each contribute to the S-adenosyl-L-methionine site.

It belongs to the class I-like SAM-binding methyltransferase superfamily. TPMT family.

Its subcellular location is the cytoplasm. It carries out the reaction S-adenosyl-L-methionine + a thiopurine = S-adenosyl-L-homocysteine + a thiopurine S-methylether.. This Aliivibrio fischeri (strain ATCC 700601 / ES114) (Vibrio fischeri) protein is Thiopurine S-methyltransferase.